The following is a 143-amino-acid chain: Methylglyoxal synthase (143 aa).

One can recognise an MGS-like domain in the interval Met1–Ile143. Substrate contacts are provided by residues His11, Lys15, Thr37–Thr40, and Ser57–Gly58. Residue Asp63 is the Proton donor/acceptor of the active site. His90 is a binding site for substrate.

This sequence belongs to the methylglyoxal synthase family.

The catalysed reaction is dihydroxyacetone phosphate = methylglyoxal + phosphate. Catalyzes the formation of methylglyoxal from dihydroxyacetone phosphate. This chain is Methylglyoxal synthase, found in Coxiella burnetii (strain Dugway 5J108-111).